Reading from the N-terminus, the 369-residue chain is DNA replication and repair protein RecF (369 aa).

30–37 contributes to the ATP binding site; the sequence is GRNAQGKT.

It belongs to the RecF family.

It localises to the cytoplasm. In terms of biological role, the RecF protein is involved in DNA metabolism; it is required for DNA replication and normal SOS inducibility. RecF binds preferentially to single-stranded, linear DNA. It also seems to bind ATP. This chain is DNA replication and repair protein RecF, found in Streptococcus agalactiae serotype Ia (strain ATCC 27591 / A909 / CDC SS700).